Consider the following 428-residue polypeptide: C4-dicarboxylate transport protein (428 aa).

9 helical membrane passes run 8–28, 44–64, 76–96, 142–162, 184–204, 222–242, 289–309, 326–346, and 352–372; these read SLYV…HFYP, LIKM…IAGM, VALL…LIIV, IGAF…LFGF, VIFG…FGAM, LIIC…GSIA, VVGL…SIYL, IFHQ…AAGV, and IVLA…LALI.

The protein belongs to the dicarboxylate/amino acid:cation symporter (DAACS) (TC 2.A.23) family.

It localises to the cell inner membrane. Responsible for the transport of dicarboxylates such as succinate, fumarate, and malate from the periplasm across the membrane. This Klebsiella pneumoniae (strain 342) protein is C4-dicarboxylate transport protein.